Reading from the N-terminus, the 240-residue chain is Coat protein (240 aa).

A compositionally biased stretch (polar residues) spans 1–10 (MATPSTQTTD). Residues 1 to 27 (MATPSTQTTDPKPANADLSDPNRAPSL) are disordered.

It belongs to the potexvirus capsid protein family.

The protein localises to the virion. Its function is as follows. Required for genome encapsidation. Forms ribonucleoprotein complexes along with TGB1 helicase and viral RNA. The polypeptide is Coat protein (Narcissus pseudonarcissus (Daffodil)).